A 230-amino-acid chain; its full sequence is Interleukin-6 (230 aa).

The first 24 residues, 1 to 24 (MASKHNADLSSAAMLAALLLCALG), serve as a signal peptide directing secretion. The cysteines at positions 96 and 106 are disulfide-linked. N-linked (GlcNAc...) asparagine glycosylation is present at asparagine 100. The segment covering 206 to 218 (REMPKQKRRKDDG) has biased composition (basic and acidic residues). A disordered region spans residues 206–230 (REMPKQKRRKDDGIIPPIHPSYQMT).

Belongs to the IL-6 superfamily. As to quaternary structure, component of a hexamer of two molecules each of IL6, IL6R and IL6ST; first binds to IL6R to associate with the signaling subunit IL6ST. Expressed in kidney and spleen. Low expression in liver and gills.

It localises to the secreted. Cytokine with a wide variety of biological functions in immunity, tissue regeneration, and metabolism. Binds to IL6R, then the complex associates to the signaling subunit IL6ST/gp130 to trigger the intracellular IL6-signaling pathway. The interaction with the membrane-bound IL6R and IL6ST stimulates 'classic signaling', whereas the binding of IL6 and soluble IL6R to IL6ST stimulates 'trans-signaling'. Alternatively, 'cluster signaling' occurs when membrane-bound IL6:IL6R complexes on transmitter cells activate IL6ST receptors on neighboring receiver cells. This chain is Interleukin-6 (il6), found in Paralichthys olivaceus (Bastard halibut).